Consider the following 529-residue polypeptide: GMP synthase [glutamine-hydrolyzing] (529 aa).

The 202-residue stretch at 3-204 (TVAIVDFGSQ…FLKIAGCTRD (202 aa)) folds into the Glutamine amidotransferase type-1 domain. Cys-87 acts as the Nucleophile in catalysis. Active-site residues include His-179 and Glu-181. Positions 205-395 (WTMGSFLHTQ…LGLPSAILDR (191 aa)) constitute a GMPS ATP-PPase domain. Position 232 to 238 (232 to 238 (SGGVDSS)) interacts with ATP.

As to quaternary structure, homodimer.

The enzyme catalyses XMP + L-glutamine + ATP + H2O = GMP + L-glutamate + AMP + diphosphate + 2 H(+). It functions in the pathway purine metabolism; GMP biosynthesis; GMP from XMP (L-Gln route): step 1/1. Functionally, catalyzes the synthesis of GMP from XMP. This chain is GMP synthase [glutamine-hydrolyzing], found in Anaplasma marginale (strain St. Maries).